The following is a 48-amino-acid chain: MSLKEKILDKVEDFLKTIIIKYWYIDLTITIFAFLILYLIEKFRKNKV.

A helical membrane pass occupies residues 18–38 (IIIKYWYIDLTITIFAFLILY).

It localises to the host membrane. This is an uncharacterized protein from Acidianus bottle-shaped virus (isolate Italy/Pozzuoli) (ABV).